The following is a 262-amino-acid chain: Putative hydro-lyase Mflv_5194 (262 aa).

Belongs to the D-glutamate cyclase family.

The chain is Putative hydro-lyase Mflv_5194 from Mycolicibacterium gilvum (strain PYR-GCK) (Mycobacterium gilvum (strain PYR-GCK)).